Consider the following 554-residue polypeptide: Undecaprenyl phosphate-alpha-4-amino-4-deoxy-L-arabinose arabinosyl transferase (554 aa).

11 helical membrane passes run 4-24, 87-107, 115-135, 178-198, 206-226, 262-282, 293-313, 315-335, 351-371, 384-404, and 414-434; these read LKDSGAALLALFFVLVYLLPV, FGSIFSTALSAVLVYWLATLL, VLATLIYLSFLLVFGIGTYAV, FMTKGFLALAVPVIAVLPIVI, LVVFGPIAIVCAVLLSLPWAL, YLPILCIGVLPWLGLLPGALF, ELFFLLSWVVMPLLFFSVAKG, LPTYILPCMAPLSLLMAAYAT, VINLLFGVACALVIVVIGLGL, QKVWLGVLAFAGWGVTGFITL, and AAACPLLFILLVGYLIPQQVV.

It belongs to the glycosyltransferase 83 family.

It is found in the cell inner membrane. The catalysed reaction is 4-amino-4-deoxy-alpha-L-arabinopyranosyl di-trans,octa-cis-undecaprenyl phosphate + lipid IVA = lipid IIA + di-trans,octa-cis-undecaprenyl phosphate.. Its pathway is lipopolysaccharide metabolism; 4-amino-4-deoxy-beta-L-arabinose-lipid A biosynthesis. In terms of biological role, catalyzes the transfer of the L-Ara4N moiety of the glycolipid undecaprenyl phosphate-alpha-L-Ara4N to lipid A. The modified arabinose is attached to lipid A and is required for resistance to polymyxin and cationic antimicrobial peptides. The sequence is that of Undecaprenyl phosphate-alpha-4-amino-4-deoxy-L-arabinose arabinosyl transferase from Yersinia pseudotuberculosis serotype O:3 (strain YPIII).